Reading from the N-terminus, the 758-residue chain is Calpain (758 aa).

The Calpain catalytic domain occupies Leu99–Gly397. Active-site residues include Cys154, His313, and Asn337. The tract at residues Leu398 to Glu562 is domain III. Residues Asp563–Thr582 are linker. The segment at Leu583 to Tyr757 is domain IV. The Ca(2+) site is built by Asp641, Asn643, Thr645, His647, Glu652, Asp671, Asp673, Ser675, Tyr677, and Glu682. EF-hand domains follow at residues Ile658 to His693 and Val694 to Ala729.

This sequence belongs to the peptidase C2 family.

Its activity is regulated as follows. Activated by free cytoplasmic calcium. Functionally, calpains are calcium-activated non-lysosomal thiol-proteases. The polypeptide is Calpain (Schistosoma mansoni (Blood fluke)).